The primary structure comprises 865 residues: Protein translocase subunit SecA (865 aa).

Residues Gln85, 103 to 107 (GEGKT), and Asp505 contribute to the ATP site. 4 residues coordinate Zn(2+): Cys847, Cys849, Cys858, and His859.

Belongs to the SecA family. Monomer and homodimer. Part of the essential Sec protein translocation apparatus which comprises SecA, SecYEG and auxiliary proteins SecDF. Other proteins may also be involved. The cofactor is Zn(2+).

It localises to the cell membrane. It is found in the cytoplasm. It carries out the reaction ATP + H2O + cellular proteinSide 1 = ADP + phosphate + cellular proteinSide 2.. Its function is as follows. Part of the Sec protein translocase complex. Interacts with the SecYEG preprotein conducting channel. Has a central role in coupling the hydrolysis of ATP to the transfer of proteins into and across the cell membrane, serving as an ATP-driven molecular motor driving the stepwise translocation of polypeptide chains across the membrane. This Lactococcus lactis subsp. cremoris (strain MG1363) protein is Protein translocase subunit SecA.